A 287-amino-acid chain; its full sequence is MDQIAKCIKEGTHTLFPFYDNLPDVNLFLGNSPLPSLEYGANYFLQLSRVNDLNRLPTDLLSLFTHEIMVQENDLEKVYDILNIHSVKSYGKTIKADAVVIDLSAKNKLFKKDRELIKSNNYLTENNLYISDYKMLTFEVFRPLFEMSSEKYCIIKLPTLFGRCVIDTTRVYCSLFKSVRLFKCANDSWLKDSAIIVASNACKKNIDYFMSHIRSVTKSLNWKESNNVQFSILKDSVDKEFIDKFLNFSTKVYESLYYVHSLLYSSMTSESKSIENEYQKKLTKLLL.

Heterodimer of a large and a small subunit.

It is found in the virion. The catalysed reaction is a 5'-end (5'-triphosphoguanosine)-ribonucleoside in mRNA + S-adenosyl-L-methionine = a 5'-end (N(7)-methyl 5'-triphosphoguanosine)-ribonucleoside in mRNA + S-adenosyl-L-homocysteine. Functionally, catalyzes the last reaction in the mRNA cap formation pathway. The polypeptide is mRNA-capping enzyme small subunit (Erythrocebus patas (Red guenon)).